We begin with the raw amino-acid sequence, 707 residues long: MSPFLRIGLSNFDCGTCQACQGEAVNPYCAVLVKEYVESENGQMYIQKKPTMYPPWDSTFDAHINKGRVMQIIVKGKNVDLISETTVELYSLAERCRKNNGRTEIWLELKPQGRMLMNARYFLEMSDTKDMSEFENEGFFALHQRRGAIKQAKVHHVKCHEFTATFFPQPTFCSVCHEFVWGLNKQGYQCRQCNAAIHKKCIDKVIAKCTGSAINSRETMFHKERFKIDMPHRFKVYNYKSPTFCEHCGTLLWGLARQGLKCDACGMNVHHRCQTKVANLCGINQKLMAEALAMIESTQQARSLRDSEHIFREGPVEIGLPCSTKNETRPPCVPTPGKREPQGISWDSPLDGSNKSAGPPEPEVSMRRTSLQLKLKIDDFILHKMLGKGSFGKVFLAEFKRTNQFFAIKALKKDVVLMDDDVECTMVEKRVLSLAWEHPFLTHMFCTFQTKENLFFVMEYLNGGDLMYHIQSCHKFDLSRATFYAAEVILGLQFLHSKGIVYRDLKLDNILLDRDGHIKIADFGMCKENMLGDAKTNTFCGTPDYIAPEILLGQKYNHSVDWWSFGVLVYEMLIGQSPFHGQDEEELFHSIRMDNPFYPRWLEREAKDLLVKLFVREPEKRLGVRGDIRQHPLFREINWEELERKEIDPPFRPKVKSPYDCSNFDKEFLSEKPRLSFADRALINSMDQNMFSNFSFINPGMETLICS.

One can recognise a C2 domain in the interval 1–107 (MSPFLRIGLS…KNNGRTEIWL (107 aa)). Position 90 is a phosphotyrosine; by LCK (Tyr90). The Phorbol-ester/DAG-type 1 zinc finger occupies 159–209 (CHEFTATFFPQPTFCSVCHEFVWGLNKQGYQCRQCNAAIHKKCIDKVIAKC). A Phosphothreonine; by autocatalysis modification is found at Thr219. Residues 231–281 (PHRFKVYNYKSPTFCEHCGTLLWGLARQGLKCDACGMNVHHRCQTKVANLC) form a Phorbol-ester/DAG-type 2 zinc finger. The segment at 327-365 (ETRPPCVPTPGKREPQGISWDSPLDGSNKSAGPPEPEVS) is disordered. Position 348 is a phosphoserine (Ser348). The Protein kinase domain maps to 380–634 (FILHKMLGKG…RGDIRQHPLF (255 aa)). Residues 386–394 (LGKGSFGKV) and Lys409 contribute to the ATP site. Catalysis depends on Asp504, which acts as the Proton acceptor. Phosphothreonine; by PDPK1 is present on Thr538. Residues 635-706 (REINWEELER…INPGMETLIC (72 aa)) form the AGC-kinase C-terminal domain. A Phosphoserine; by autocatalysis modification is found at Ser676. Phosphoserine is present on Ser685. Residue Ser695 is modified to Phosphoserine; by autocatalysis.

Belongs to the protein kinase superfamily. AGC Ser/Thr protein kinase family. PKC subfamily. As to quaternary structure, part of a membrane raft complex composed at least of BCL10, CARD11, MALT1 and IKBKB. Interacts with GLRX3 (via N-terminus). Interacts with ECT2. Interacts with CCDC88A/GIV; the interaction leads to phosphorylation of CCDC88A and inhibition of its guanine nucleotide exchange factor activity. Interacts with CD28. Requires Mg(2+) as cofactor. Autophosphorylation at Thr-219 is required for targeting to the TCR and cellular function of PRKCQ upon antigen receptor ligation. Following TCR stimulation, phosphorylated at Tyr-90 and Ser-685. As to expression, T-lymphocytes and skeletal muscle.

It is found in the cytoplasm. The protein localises to the cell membrane. It catalyses the reaction L-seryl-[protein] + ATP = O-phospho-L-seryl-[protein] + ADP + H(+). It carries out the reaction L-threonyl-[protein] + ATP = O-phospho-L-threonyl-[protein] + ADP + H(+). Its activity is regulated as follows. Novel PKCs (PRKCD, PRKCE, PRKCH and PRKCQ) are calcium-insensitive, but activated by diacylglycerol (DAG) and phosphatidylserine. Three specific sites; Thr-538 (activation loop of the kinase domain), Ser-676 (turn motif) and Ser-695 (hydrophobic region), need to be phosphorylated for its full activation. Calcium-independent, phospholipid- and diacylglycerol (DAG)-dependent serine/threonine-protein kinase that mediates non-redundant functions in T-cell receptor (TCR) signaling, including T-cells activation, proliferation, differentiation and survival, by mediating activation of multiple transcription factors such as NF-kappa-B, JUN, NFATC1 and NFATC2. In TCR-CD3/CD28-co-stimulated T-cells, is required for the activation of NF-kappa-B and JUN, which in turn are essential for IL2 production, and participates in the calcium-dependent NFATC1 and NFATC2 transactivation. Mediates the activation of the canonical NF-kappa-B pathway (NFKB1) by direct phosphorylation of CARD11 on several serine residues, inducing CARD11 association with lipid rafts and recruitment of the BCL10-MALT1 complex, which then activates IKK complex, resulting in nuclear translocation and activation of NFKB1. May also play an indirect role in activation of the non-canonical NF-kappa-B (NFKB2) pathway. In the signaling pathway leading to JUN activation, acts by phosphorylating the mediator STK39/SPAK and may not act through MAP kinases signaling. Plays a critical role in TCR/CD28-induced NFATC1 and NFATC2 transactivation by participating in the regulation of reduced inositol 1,4,5-trisphosphate generation and intracellular calcium mobilization. After costimulation of T-cells through CD28 can phosphorylate CBLB and is required for the ubiquitination and subsequent degradation of CBLB, which is a prerequisite for the activation of TCR. During T-cells differentiation, plays an important role in the development of T-helper 2 (Th2) cells following immune and inflammatory responses, and, in the development of inflammatory autoimmune diseases, is necessary for the activation of IL17-producing Th17 cells. May play a minor role in Th1 response. Upon TCR stimulation, mediates T-cell protective survival signal by phosphorylating BAD, thus protecting T-cells from BAD-induced apoptosis, and by up-regulating BCL-X(L)/BCL2L1 levels through NF-kappa-B and JUN pathways. In platelets, regulates signal transduction downstream of the ITGA2B, CD36/GP4, F2R/PAR1 and F2RL3/PAR4 receptors, playing a positive role in 'outside-in' signaling and granule secretion signal transduction. May relay signals from the activated ITGA2B receptor by regulating the uncoupling of WASP and WIPF1, thereby permitting the regulation of actin filament nucleation and branching activity of the Arp2/3 complex. May mediate inhibitory effects of free fatty acids on insulin signaling by phosphorylating IRS1, which in turn blocks IRS1 tyrosine phosphorylation and downstream activation of the PI3K/AKT pathway. Phosphorylates MSN (moesin) in the presence of phosphatidylglycerol or phosphatidylinositol. Phosphorylates PDPK1 at 'Ser-504' and 'Ser-532' and negatively regulates its ability to phosphorylate PKB/AKT1. Phosphorylates CCDC88A/GIV and inhibits its guanine nucleotide exchange factor activity. Phosphorylates and activates LRRK1, which phosphorylates RAB proteins involved in intracellular trafficking. This Mus musculus (Mouse) protein is Protein kinase C theta type (Prkcq).